We begin with the raw amino-acid sequence, 374 residues long: Occlusion-derived virus envelope protein E56 (374 aa).

Residues 155–175 (AGVGVLLAGGAYLTFSAATLV) form a helical membrane-spanning segment. N-linked (GlcNAc...) asparagine; by host glycosylation occurs at asparagine 183. Residues 319–339 (LMPLIWLIGAVLFLALVVYLI) form a helical membrane-spanning segment. The segment at 355–374 (PPVVIVPPPATTNLNPQQQI) is disordered.

This sequence belongs to the baculoviridae E56 family.

It localises to the virion membrane. In terms of biological role, structural protein that is specific for occlusion-derived virus (ODV) envelopes but not of budded virus (BV). In Orgyia pseudotsugata (Douglas-fir tussock moth), this protein is Occlusion-derived virus envelope protein E56 (ODVP6E).